Here is a 101-residue protein sequence, read N- to C-terminus: NADH-quinone oxidoreductase subunit K (101 aa).

Helical transmembrane passes span 4 to 24 (LSHY…GIFL), 30 to 50 (IVLL…FIAF), and 61 to 81 (IFVF…LAIL).

The protein belongs to the complex I subunit 4L family. As to quaternary structure, NDH-1 is composed of 14 different subunits. Subunits NuoA, H, J, K, L, M, N constitute the membrane sector of the complex.

The protein resides in the cell inner membrane. It catalyses the reaction a quinone + NADH + 5 H(+)(in) = a quinol + NAD(+) + 4 H(+)(out). In terms of biological role, NDH-1 shuttles electrons from NADH, via FMN and iron-sulfur (Fe-S) centers, to quinones in the respiratory chain. The immediate electron acceptor for the enzyme in this species is believed to be ubiquinone. Couples the redox reaction to proton translocation (for every two electrons transferred, four hydrogen ions are translocated across the cytoplasmic membrane), and thus conserves the redox energy in a proton gradient. The sequence is that of NADH-quinone oxidoreductase subunit K from Aromatoleum aromaticum (strain DSM 19018 / LMG 30748 / EbN1) (Azoarcus sp. (strain EbN1)).